Consider the following 430-residue polypeptide: Adenylosuccinate synthetase (430 aa).

GTP-binding positions include 12-18 (GDEGKGK) and 40-42 (GHT). The Proton acceptor role is filled by Asp13. Residues Asp13 and Gly40 each contribute to the Mg(2+) site. Residues 13–16 (DEGK), 38–41 (NAGH), Thr129, Arg143, Gln224, Thr239, and Arg303 each bind IMP. His41 serves as the catalytic Proton donor. Position 299–305 (299–305 (TVSNRER)) interacts with substrate. GTP-binding positions include Arg305, 331–333 (KLD), and 413–415 (STG).

The protein belongs to the adenylosuccinate synthetase family. As to quaternary structure, homodimer. Mg(2+) is required as a cofactor.

It is found in the cytoplasm. It catalyses the reaction IMP + L-aspartate + GTP = N(6)-(1,2-dicarboxyethyl)-AMP + GDP + phosphate + 2 H(+). Its pathway is purine metabolism; AMP biosynthesis via de novo pathway; AMP from IMP: step 1/2. Its function is as follows. Plays an important role in the de novo pathway of purine nucleotide biosynthesis. Catalyzes the first committed step in the biosynthesis of AMP from IMP. This chain is Adenylosuccinate synthetase, found in Ehrlichia ruminantium (strain Gardel).